The following is a 310-amino-acid chain: MIIVTGGAGFIGSNIVKALNDKGITDILVVDNLKDGTKFVNLVDLNIADYMDKEDFLIQIMSGEELGDIEAIFHEGACSSTTEWDGKYMMDNNYQYSKELLHYCLEREIPFLYASSAATYGGRTSDFIESREYEKPLNVYGYSKFLFDEYVRQILPEANSQIVGFRYFNVYGPREGHKGSMASVAFHLNTQLNNGESPKLFEGSENFKRDFVYVGDVAAVNLWFLESGKSGIFNLGTGRAESFQAVADATLAYHKKGSIEYIPFPDKLKGRYQAFTQADLTNLRNAGYDKPFKTVAEGVTEYMAWLNRDS.

NADP(+)-binding positions include 10-11 (FI), 31-32 (DN), lysine 38, lysine 53, 75-79 (EGACS), and asparagine 92. The Proton acceptor role is filled by tyrosine 140. Lysine 144 provides a ligand contact to NADP(+). Asparagine 169 is a substrate binding site. NADP(+) contacts are provided by valine 170 and lysine 178. Lysine 178 serves as the catalytic Proton acceptor. Substrate contacts are provided by residues serine 180, histidine 187, 201–204 (FEGS), arginine 209, and tyrosine 272.

Belongs to the NAD(P)-dependent epimerase/dehydratase family. HldD subfamily. Homopentamer. It depends on NADP(+) as a cofactor.

It catalyses the reaction ADP-D-glycero-beta-D-manno-heptose = ADP-L-glycero-beta-D-manno-heptose. Its pathway is nucleotide-sugar biosynthesis; ADP-L-glycero-beta-D-manno-heptose biosynthesis; ADP-L-glycero-beta-D-manno-heptose from D-glycero-beta-D-manno-heptose 7-phosphate: step 4/4. Its function is as follows. Catalyzes the interconversion between ADP-D-glycero-beta-D-manno-heptose and ADP-L-glycero-beta-D-manno-heptose via an epimerization at carbon 6 of the heptose. This Salmonella newport (strain SL254) protein is ADP-L-glycero-D-manno-heptose-6-epimerase.